Consider the following 602-residue polypeptide: Putative ankyrin repeat protein L100 (602 aa).

11 ANK repeats span residues 133 to 162, 269 to 294, 295 to 324, 325 to 354, 355 to 384, 386 to 414, 416 to 444, 445 to 474, 476 to 504, 506 to 534, and 536 to 566; these read VLFY…SLIS, YLEK…KKSI, NKER…NINL, LKGT…DIHI, RDNA…DIHT, SSQA…DIRS, ENIL…DVLS, KGVE…DICA, DNEA…DVKA, DNEA…DITA, and NNEA…DVHA.

The polypeptide is Putative ankyrin repeat protein L100 (Acanthamoeba polyphaga mimivirus (APMV)).